The sequence spans 208 residues: Uracil phosphoribosyltransferase (208 aa).

Residues Arg-78, Arg-103, and 130-138 (DPMLATGGT) contribute to the 5-phospho-alpha-D-ribose 1-diphosphate site. Uracil contacts are provided by residues Ile-193 and 198–200 (GDA). Asp-199 contacts 5-phospho-alpha-D-ribose 1-diphosphate.

The protein belongs to the UPRTase family. It depends on Mg(2+) as a cofactor.

The enzyme catalyses UMP + diphosphate = 5-phospho-alpha-D-ribose 1-diphosphate + uracil. The protein operates within pyrimidine metabolism; UMP biosynthesis via salvage pathway; UMP from uracil: step 1/1. Its activity is regulated as follows. Allosterically activated by GTP. Its function is as follows. Catalyzes the conversion of uracil and 5-phospho-alpha-D-ribose 1-diphosphate (PRPP) to UMP and diphosphate. This chain is Uracil phosphoribosyltransferase, found in Blochmanniella floridana.